The following is a 342-amino-acid chain: CMP-N-acetylneuraminate-beta-galactosamide-alpha-2,3-sialyltransferase 1 (342 aa).

The Cytoplasmic portion of the chain corresponds to 1–10 (MVTVRKRNVK). The helical; Signal-anchor for type II membrane protein transmembrane segment at 11 to 28 (VFTFAFVLITVTSFLLNY) threads the bilayer. Residues 29-342 (KHQVTMTTWD…IEKIKFFKGR (314 aa)) lie on the Lumenal side of the membrane. Intrachain disulfides connect Cys61–Cys66, Cys63–Cys141, and Cys144–Cys283. Asn81 carries an N-linked (GlcNAc...) asparagine glycan. Substrate is bound at residue Gln107. An N-linked (GlcNAc...) asparagine glycan is attached at Asn116. Residues Asn149 and Asn172 each coordinate substrate. N-linked (GlcNAc...) asparagine glycans are attached at residues Asn203 and Asn229. Positions 232, 268, 272, 292, and 301 each coordinate substrate. Asn306 carries N-linked (GlcNAc...) asparagine glycosylation. A substrate-binding site is contributed by His318. An N-linked (GlcNAc...) asparagine glycan is attached at Asn325.

The protein belongs to the glycosyltransferase 29 family. In terms of processing, the soluble form derives from the membrane form by proteolytic processing.

It localises to the golgi apparatus. The protein localises to the golgi stack membrane. Its subcellular location is the secreted. It catalyses the reaction a beta-D-galactosyl-(1-&gt;3)-N-acetyl-alpha-D-galactosaminyl derivative + CMP-N-acetyl-beta-neuraminate = an N-acetyl-alpha-neuraminyl-(2-&gt;3)-beta-D-galactosyl-(1-&gt;3)-N-acetyl-alpha-D-galactosaminyl derivative + CMP + H(+). The protein operates within protein modification; protein glycosylation. Functionally, responsible for the synthesis of the sequence NeuAc-alpha-2,3-Gal-beta-1,3-GalNAc- found on sugar chains O-linked to Thr or Ser and also as a terminal sequence on certain gangliosides. SIAT4A and SIAT4B sialylate the same acceptor substrates but exhibit different Km values. The polypeptide is CMP-N-acetylneuraminate-beta-galactosamide-alpha-2,3-sialyltransferase 1 (ST3GAL1) (Gallus gallus (Chicken)).